Here is a 387-residue protein sequence, read N- to C-terminus: 1-deoxy-D-xylulose 5-phosphate reductoisomerase (387 aa).

Positions 10, 11, 12, 13, 36, 37, 38, and 123 each coordinate NADPH. Lys124 contacts 1-deoxy-D-xylulose 5-phosphate. Glu125 contacts NADPH. Asp149 is a Mn(2+) binding site. 1-deoxy-D-xylulose 5-phosphate-binding residues include Ser150, Glu151, Ser175, and His198. Glu151 serves as a coordination point for Mn(2+). Gly204 is a binding site for NADPH. Residues Ser211, Asn216, Lys217, and Glu220 each contribute to the 1-deoxy-D-xylulose 5-phosphate site. Glu220 serves as a coordination point for Mn(2+).

Belongs to the DXR family. Mg(2+) serves as cofactor. The cofactor is Mn(2+).

The catalysed reaction is 2-C-methyl-D-erythritol 4-phosphate + NADP(+) = 1-deoxy-D-xylulose 5-phosphate + NADPH + H(+). It functions in the pathway isoprenoid biosynthesis; isopentenyl diphosphate biosynthesis via DXP pathway; isopentenyl diphosphate from 1-deoxy-D-xylulose 5-phosphate: step 1/6. Functionally, catalyzes the NADPH-dependent rearrangement and reduction of 1-deoxy-D-xylulose-5-phosphate (DXP) to 2-C-methyl-D-erythritol 4-phosphate (MEP). The sequence is that of 1-deoxy-D-xylulose 5-phosphate reductoisomerase from Pelotomaculum thermopropionicum (strain DSM 13744 / JCM 10971 / SI).